Reading from the N-terminus, the 116-residue chain is Putative pterin-4-alpha-carbinolamine dehydratase 1 (116 aa).

This sequence belongs to the pterin-4-alpha-carbinolamine dehydratase family.

The catalysed reaction is (4aS,6R)-4a-hydroxy-L-erythro-5,6,7,8-tetrahydrobiopterin = (6R)-L-erythro-6,7-dihydrobiopterin + H2O. The sequence is that of Putative pterin-4-alpha-carbinolamine dehydratase 1 from Cupriavidus pinatubonensis (strain JMP 134 / LMG 1197) (Cupriavidus necator (strain JMP 134)).